The sequence spans 509 residues: Maturase K (509 aa).

Belongs to the intron maturase 2 family. MatK subfamily.

The protein resides in the plastid. Its subcellular location is the chloroplast. Functionally, usually encoded in the trnK tRNA gene intron. Probably assists in splicing its own and other chloroplast group II introns. This chain is Maturase K, found in Galbulimima belgraveana (Northern pigeonberry ash).